The chain runs to 458 residues: Argininosuccinate lyase (458 aa).

It belongs to the lyase 1 family. Argininosuccinate lyase subfamily.

It localises to the cytoplasm. The catalysed reaction is 2-(N(omega)-L-arginino)succinate = fumarate + L-arginine. It participates in amino-acid biosynthesis; L-arginine biosynthesis; L-arginine from L-ornithine and carbamoyl phosphate: step 3/3. In Acetivibrio thermocellus (strain ATCC 27405 / DSM 1237 / JCM 9322 / NBRC 103400 / NCIMB 10682 / NRRL B-4536 / VPI 7372) (Clostridium thermocellum), this protein is Argininosuccinate lyase.